We begin with the raw amino-acid sequence, 260 residues long: Small ribosomal subunit protein uS2 (260 aa).

This sequence belongs to the universal ribosomal protein uS2 family.

This chain is Small ribosomal subunit protein uS2, found in Streptococcus sanguinis (strain SK36).